The following is a 337-amino-acid chain: MRKSLITKWLFVSCIMVIAMVVIGGITRLTGAGLSIVEWRPVTGILPPFSFESWQAEFAKYKAFPEYNSVNYGMTLSEFKCIYLLEFIHRLLGRMTVLIYIVPLIYFYFKDVIKNCDMLPYIIALLLFCVQGFMGWYMVKSGLLNSPSVSHFRLAFHLIIAVIIYHILFYQLIKNRCDILLIPSQTDLKLPLIFSGIAITVIYVQIFLGALVAGLDAGLIYNSFPLMGDHCIPMEIKDNFFNLANLHDPVFIQFIHRLGSYSVFLVVVVLVICLLTIEHPKLNKIAYFLMIALLMQISTGIITLLYSVPIIIASIHQLFAIILLSIIIWCYFLINSS.

5 helical membrane passes run 6–26, 87–107, 119–139, 154–174, and 192–212; these read ITKW…IGGI, FIHR…LIYF, LPYI…WYMV, LAFH…QLIK, and LIFS…GALV. Heme is bound at residue His-256. 3 consecutive transmembrane segments (helical) span residues 258-278, 285-305, and 308-328; these read LGSY…LTIE, IAYF…ITLL, and VPII…SIII. His-316 lines the heme pocket.

The protein belongs to the COX15/CtaA family. Type 2 subfamily. As to quaternary structure, interacts with CtaB. The cofactor is heme b.

The protein localises to the cell membrane. The catalysed reaction is Fe(II)-heme o + 2 A + H2O = Fe(II)-heme a + 2 AH2. Its pathway is porphyrin-containing compound metabolism; heme A biosynthesis; heme A from heme O: step 1/1. Its function is as follows. Catalyzes the conversion of heme O to heme A by two successive hydroxylations of the methyl group at C8. The first hydroxylation forms heme I, the second hydroxylation results in an unstable dihydroxymethyl group, which spontaneously dehydrates, resulting in the formyl group of heme A. In Rickettsia akari (strain Hartford), this protein is Heme A synthase.